Reading from the N-terminus, the 254-residue chain is Chymotrypsin-like serine proteinase (254 aa).

An N-terminal signal peptide occupies residues 1–18 (MNALLNILLCTLAATALA). The propeptide at 19-23 (EISPN) is activation peptide. The 231-residue stretch at 24-254 (IVGGSNAAAG…SSFYNWVQTQ (231 aa)) folds into the Peptidase S1 domain. Cysteines 53 and 69 form a disulfide. Active-site charge relay system residues include H68 and D117. 3 disulfides stabilise this stretch: C146/C218, C181/C199, and C208/C233. S212 (charge relay system) is an active-site residue.

It belongs to the peptidase S1 family. In terms of assembly, monomer. Expressed specifically in the distal quarter of the intestine.

The protein localises to the secreted. It is found in the extracellular space. With respect to regulation, activated by an autocatalytic mechanism. Its function is as follows. Specificity similar to chymotrypsin. This Haliotis rufescens (California red abalone) protein is Chymotrypsin-like serine proteinase.